The following is a 245-amino-acid chain: 1-(5-phosphoribosyl)-5-[(5-phosphoribosylamino)methylideneamino] imidazole-4-carboxamide isomerase (245 aa).

Asp7 functions as the Proton acceptor in the catalytic mechanism. The active-site Proton donor is the Asp129.

The protein belongs to the HisA/HisF family.

It localises to the cytoplasm. It catalyses the reaction 1-(5-phospho-beta-D-ribosyl)-5-[(5-phospho-beta-D-ribosylamino)methylideneamino]imidazole-4-carboxamide = 5-[(5-phospho-1-deoxy-D-ribulos-1-ylimino)methylamino]-1-(5-phospho-beta-D-ribosyl)imidazole-4-carboxamide. The protein operates within amino-acid biosynthesis; L-histidine biosynthesis; L-histidine from 5-phospho-alpha-D-ribose 1-diphosphate: step 4/9. This Erwinia tasmaniensis (strain DSM 17950 / CFBP 7177 / CIP 109463 / NCPPB 4357 / Et1/99) protein is 1-(5-phosphoribosyl)-5-[(5-phosphoribosylamino)methylideneamino] imidazole-4-carboxamide isomerase.